The primary structure comprises 199 residues: Holliday junction branch migration complex subunit RuvA (199 aa).

Positions Met-1–Arg-64 are domain I. The tract at residues Thr-65 to Glu-143 is domain II. Positions Ala-144–Ala-154 are flexible linker. Residues Ala-154–Lys-199 are domain III.

It belongs to the RuvA family. Homotetramer. Forms an RuvA(8)-RuvB(12)-Holliday junction (HJ) complex. HJ DNA is sandwiched between 2 RuvA tetramers; dsDNA enters through RuvA and exits via RuvB. An RuvB hexamer assembles on each DNA strand where it exits the tetramer. Each RuvB hexamer is contacted by two RuvA subunits (via domain III) on 2 adjacent RuvB subunits; this complex drives branch migration. In the full resolvosome a probable DNA-RuvA(4)-RuvB(12)-RuvC(2) complex forms which resolves the HJ.

It is found in the cytoplasm. In terms of biological role, the RuvA-RuvB-RuvC complex processes Holliday junction (HJ) DNA during genetic recombination and DNA repair, while the RuvA-RuvB complex plays an important role in the rescue of blocked DNA replication forks via replication fork reversal (RFR). RuvA specifically binds to HJ cruciform DNA, conferring on it an open structure. The RuvB hexamer acts as an ATP-dependent pump, pulling dsDNA into and through the RuvAB complex. HJ branch migration allows RuvC to scan DNA until it finds its consensus sequence, where it cleaves and resolves the cruciform DNA. This is Holliday junction branch migration complex subunit RuvA from Geobacter sulfurreducens (strain ATCC 51573 / DSM 12127 / PCA).